A 434-amino-acid chain; its full sequence is UDP-N-acetylglucosamine 1-carboxyvinyltransferase (434 aa).

A phosphoenolpyruvate-binding site is contributed by Lys34–Asn35. Residue Arg104 participates in UDP-N-acetyl-alpha-D-glucosamine binding. Cys128 serves as the catalytic Proton donor. Cys128 carries the 2-(S-cysteinyl)pyruvic acid O-phosphothioketal modification. UDP-N-acetyl-alpha-D-glucosamine contacts are provided by Asp319 and Ile341.

Belongs to the EPSP synthase family. MurA subfamily.

The protein resides in the cytoplasm. It carries out the reaction phosphoenolpyruvate + UDP-N-acetyl-alpha-D-glucosamine = UDP-N-acetyl-3-O-(1-carboxyvinyl)-alpha-D-glucosamine + phosphate. The protein operates within cell wall biogenesis; peptidoglycan biosynthesis. Functionally, cell wall formation. Adds enolpyruvyl to UDP-N-acetylglucosamine. The chain is UDP-N-acetylglucosamine 1-carboxyvinyltransferase from Prochlorococcus marinus (strain MIT 9313).